The chain runs to 98 residues: Large ribosomal subunit protein uL23 (98 aa).

Belongs to the universal ribosomal protein uL23 family. As to quaternary structure, part of the 50S ribosomal subunit. Contacts protein L29, and trigger factor when it is bound to the ribosome.

One of the early assembly proteins it binds 23S rRNA. One of the proteins that surrounds the polypeptide exit tunnel on the outside of the ribosome. Forms the main docking site for trigger factor binding to the ribosome. The polypeptide is Large ribosomal subunit protein uL23 (Methylobacterium radiotolerans (strain ATCC 27329 / DSM 1819 / JCM 2831 / NBRC 15690 / NCIMB 10815 / 0-1)).